Here is a 695-residue protein sequence, read N- to C-terminus: Polyribonucleotide nucleotidyltransferase (695 aa).

Mg(2+) contacts are provided by aspartate 486 and aspartate 492. The KH domain maps to 553–612 (PRIETMQINTSKIATVIGPGGKQIRQIIERSGAQVDINDDGVINIAASTQESINKAKELI). One can recognise an S1 motif domain in the interval 622–690 (GKVYNGRVTS…EKGQLKLSHK (69 aa)).

The protein belongs to the polyribonucleotide nucleotidyltransferase family. Mg(2+) is required as a cofactor.

The protein localises to the cytoplasm. The enzyme catalyses RNA(n+1) + phosphate = RNA(n) + a ribonucleoside 5'-diphosphate. Its function is as follows. Involved in mRNA degradation. Catalyzes the phosphorolysis of single-stranded polyribonucleotides processively in the 3'- to 5'-direction. This is Polyribonucleotide nucleotidyltransferase from Chlamydia trachomatis serovar D (strain ATCC VR-885 / DSM 19411 / UW-3/Cx).